The sequence spans 169 residues: CKLF-like MARVEL transmembrane domain-containing protein 1 (169 aa).

In terms of domain architecture, MARVEL spans 17 to 135 (NLKQPETAAA…DAFVVTTKMR (119 aa)). The next 4 membrane-spanning stretches (helical) occupy residues 22–42 (ETAA…ITQA), 46–66 (FITI…IYVL), 79–99 (LLDL…AILA), and 110–130 (YVGG…AFVV).

Belongs to the chemokine-like factor family. In terms of tissue distribution, highly expressed in testis.

The protein localises to the membrane. The polypeptide is CKLF-like MARVEL transmembrane domain-containing protein 1 (CMTM1) (Homo sapiens (Human)).